A 189-amino-acid chain; its full sequence is Chitin synthase 3 (189 aa).

This sequence belongs to the chitin synthase family. Class II subfamily.

Its subcellular location is the cell membrane. It catalyses the reaction [(1-&gt;4)-N-acetyl-beta-D-glucosaminyl](n) + UDP-N-acetyl-alpha-D-glucosamine = [(1-&gt;4)-N-acetyl-beta-D-glucosaminyl](n+1) + UDP + H(+). Its function is as follows. Polymerizes chitin, a structural polymer of the cell wall and septum, by transferring the sugar moiety of UDP-GlcNAc to the non-reducing end of the growing chitin polymer. This Ajellomyces capsulatus (Darling's disease fungus) protein is Chitin synthase 3 (CHS3).